A 141-amino-acid chain; its full sequence is Envelope glycoprotein L (141 aa).

The N-terminal stretch at 1 to 19 is a signal peptide; it reads MKWLLGAYVCLCLANILNA. The interaction with gH stretch occupies residues 21–131; it reads IPNPCCNVFA…TSAIKFKSKY (111 aa).

This sequence belongs to the herpesviridae glycoprotein L family. As to quaternary structure, interacts with glycoprotein H (gH); this interaction is necessary for the correct processing and cell surface expression of gH. The heterodimer gH/gL seems to interact with gB trimers during fusion.

It is found in the virion membrane. Its subcellular location is the host cell membrane. It localises to the host Golgi apparatus. The protein localises to the host trans-Golgi network. Functionally, the heterodimer glycoprotein H-glycoprotein L is required for the fusion of viral and plasma membranes leading to virus entry into the host cell. Acts as a functional inhibitor of gH and maintains gH in an inhibited form. Upon binding to host integrins, gL dissociates from gH leading to activation of the viral fusion glycoproteins gB and gH. This Saimiriine herpesvirus 2 (strain 11) (SaHV-2) protein is Envelope glycoprotein L.